The following is an 83-amino-acid chain: Aminoacyl carrier protein (83 aa).

The Carrier domain occupies 1–80 (MNATIREILA…DTVKLILDGK (80 aa)). Ser-35 carries the O-(pantetheine 4'-phosphoryl)serine modification.

Post-translationally, 4'-phosphopantetheine is transferred from CoA to a specific serine of the apo-form of this carrier protein.

Functionally, aminoacyl carrier protein. Can be charged with L-alanine, L-glycine or L-serine, via the formation of a thioester bond between the amino acid and the 4'-phosphopantetheinyl prosthetic group, catalyzed by the Atu2573 ligase. This is Aminoacyl carrier protein from Agrobacterium fabrum (strain C58 / ATCC 33970) (Agrobacterium tumefaciens (strain C58)).